Reading from the N-terminus, the 325-residue chain is Beta-ketoacyl-[acyl-carrier-protein] synthase III (325 aa).

Residues cysteine 116 and histidine 252 contribute to the active site. An ACP-binding region spans residues 253-257; sequence QANLR. Asparagine 282 is an active-site residue.

The protein belongs to the thiolase-like superfamily. FabH family. As to quaternary structure, homodimer.

Its subcellular location is the cytoplasm. It carries out the reaction malonyl-[ACP] + acetyl-CoA + H(+) = 3-oxobutanoyl-[ACP] + CO2 + CoA. The protein operates within lipid metabolism; fatty acid biosynthesis. Functionally, catalyzes the condensation reaction of fatty acid synthesis by the addition to an acyl acceptor of two carbons from malonyl-ACP. Catalyzes the first condensation reaction which initiates fatty acid synthesis and may therefore play a role in governing the total rate of fatty acid production. Possesses both acetoacetyl-ACP synthase and acetyl transacylase activities. Its substrate specificity determines the biosynthesis of branched-chain and/or straight-chain of fatty acids. In Xanthomonas axonopodis pv. citri (strain 306), this protein is Beta-ketoacyl-[acyl-carrier-protein] synthase III.